Reading from the N-terminus, the 123-residue chain is Small ribosomal subunit protein uS12 (123 aa).

A disordered region spans residues 1 to 32 (MPTINQLVRHGRKRSVKKTNTPALKASPQKRG). Asp89 is modified (3-methylthioaspartic acid).

The protein belongs to the universal ribosomal protein uS12 family. Part of the 30S ribosomal subunit. Contacts proteins S8 and S17. May interact with IF1 in the 30S initiation complex.

With S4 and S5 plays an important role in translational accuracy. Functionally, interacts with and stabilizes bases of the 16S rRNA that are involved in tRNA selection in the A site and with the mRNA backbone. Located at the interface of the 30S and 50S subunits, it traverses the body of the 30S subunit contacting proteins on the other side and probably holding the rRNA structure together. The combined cluster of proteins S8, S12 and S17 appears to hold together the shoulder and platform of the 30S subunit. This Desulfatibacillum aliphaticivorans protein is Small ribosomal subunit protein uS12.